A 905-amino-acid polypeptide reads, in one-letter code: MISKIITSIFGSSNDRTLKRLRKRVAQINKLEPAFEKLTDEELQAKTAEFKQRLADGASLDSLLHEAFATVREASRRVMGMRHFDVQLIGGMVLTNRNIAEMRTGEGKTLTATLPCYLNALTGKGVHVVTVNDYLARRDAETNRPLFEFLGLSVAVNVPGLPNEVKREAYKADITYSTNSELGFDYLRDNLAHAKEDRFQRELHYALVDEVDSILIDEARTPLIISGPAEDATQIYQAIDTIIPHLVQQDKEDTEEYTGEGDFTLDLKNKQAHLTERGMVKVEGILTEMGLMQEGETLYHPARIALLHHVYAALRAHKLFELNVDYIVKDGEVVIIDEHTGRTMAGRRWSDGLHQAIEAKEKVNIQGENQTVASITYQNYFRLYEKLAGMTGTADTEAFEFQQIYGLDTIVIPTNKPVIRDDRTDLMFKSEPEKFAAIIKDIQECMARQQPVLVGTASVEKSELLSAELTKAGIAHNVLNAKFHAQEAEIVAEAGAPGAVTIATNMAGRGTDIVLGGNWKAEIAKLENPTEEQIEAIKAAWKERYDIVMKAGGLHIIGTERHESRRIDNQLRGRSGRQGDPGSSRFYLSLDDALMRIYLNEGKLNMMRKAFSEEGEAMESKLLTKVIASAQAKVEAHNFDGRKNLLQYDDVANEQRKAIYEQRNYLLETEDISAMIETIRGDVFNRVIDQFIPPQSIEEMWDVAGLEEALKRQFGMELPIQHWLEQENDLHEETLRERIIDIATQEYHAKEEKVGSEVMRNFEKGVMLQNLDELWKEHLSAMDYLRKGIHLRGYAQKDPKQEYKKESFEMFTNMLDLLKSNVISVLSRIQVRSQEEIEEAQRQQEAMAQAESENYRTADHQAEAQQSESLTEEQLANLDIGRNDPCPCGSGKKYKHCHGSKARYA.

ATP contacts are provided by residues Q87, 105 to 109 (GEGKT), and D512. The segment at 840–905 (AQRQQEAMAQ…HCHGSKARYA (66 aa)) is disordered. Positions 843-852 (QQEAMAQAES) are enriched in low complexity. The segment covering 853–862 (ENYRTADHQA) has biased composition (basic and acidic residues). Positions 863-874 (EAQQSESLTEEQ) are enriched in polar residues. The Zn(2+) site is built by C886, C888, C897, and H898. Positions 892–905 (KKYKHCHGSKARYA) are enriched in basic residues.

This sequence belongs to the SecA family. As to quaternary structure, monomer and homodimer. Part of the essential Sec protein translocation apparatus which comprises SecA, SecYEG and auxiliary proteins SecDF-YajC and YidC. Zn(2+) serves as cofactor.

It is found in the cell inner membrane. Its subcellular location is the cytoplasm. It carries out the reaction ATP + H2O + cellular proteinSide 1 = ADP + phosphate + cellular proteinSide 2.. In terms of biological role, part of the Sec protein translocase complex. Interacts with the SecYEG preprotein conducting channel. Has a central role in coupling the hydrolysis of ATP to the transfer of proteins into and across the cell membrane, serving both as a receptor for the preprotein-SecB complex and as an ATP-driven molecular motor driving the stepwise translocation of polypeptide chains across the membrane. In Actinobacillus pleuropneumoniae serotype 3 (strain JL03), this protein is Protein translocase subunit SecA.